Reading from the N-terminus, the 151-residue chain is 6,7-dimethyl-8-ribityllumazine synthase (151 aa).

5-amino-6-(D-ribitylamino)uracil is bound by residues phenylalanine 15, 49–51, and 73–75; these read AVE and AVI. 78 to 79 is a (2S)-2-hydroxy-3-oxobutyl phosphate binding site; sequence ET. The Proton donor role is filled by histidine 81. Phenylalanine 106 is a 5-amino-6-(D-ribitylamino)uracil binding site. (2S)-2-hydroxy-3-oxobutyl phosphate is bound at residue arginine 120.

This sequence belongs to the DMRL synthase family. Forms an icosahedral capsid composed of 60 subunits, arranged as a dodecamer of pentamers.

It carries out the reaction (2S)-2-hydroxy-3-oxobutyl phosphate + 5-amino-6-(D-ribitylamino)uracil = 6,7-dimethyl-8-(1-D-ribityl)lumazine + phosphate + 2 H2O + H(+). Its pathway is cofactor biosynthesis; riboflavin biosynthesis; riboflavin from 2-hydroxy-3-oxobutyl phosphate and 5-amino-6-(D-ribitylamino)uracil: step 1/2. In terms of biological role, catalyzes the formation of 6,7-dimethyl-8-ribityllumazine by condensation of 5-amino-6-(D-ribitylamino)uracil with 3,4-dihydroxy-2-butanone 4-phosphate. This is the penultimate step in the biosynthesis of riboflavin. The chain is 6,7-dimethyl-8-ribityllumazine synthase from Coxiella burnetii (strain Dugway 5J108-111).